Reading from the N-terminus, the 658-residue chain is Structure-specific endonuclease subunit SLX1 (658 aa).

The region spanning 12–92 (PFYACYFLRS…AKPHLSRHLK (81 aa)) is the GIY-YIG domain. Disordered stretches follow at residues 29–52 (YIGS…QGAY), 239–269 (GVAE…ETLP), 288–328 (PIPQ…NGVD), and 594–658 (TTSR…IDLT). 2 stretches are compositionally biased toward basic and acidic residues: residues 308 to 324 (KLSD…HDAE) and 627 to 640 (SKID…DTKK). Positions 641–652 (NTTQKAKSNETS) are enriched in polar residues.

This sequence belongs to the SLX1 family. As to quaternary structure, forms a heterodimer with SLX4. Requires a divalent metal cation as cofactor.

The protein localises to the nucleus. Its function is as follows. Catalytic subunit of the SLX1-SLX4 structure-specific endonuclease that resolves DNA secondary structures generated during DNA repair and recombination. Has endonuclease activity towards branched DNA substrates, introducing single-strand cuts in duplex DNA close to junctions with ss-DNA. The chain is Structure-specific endonuclease subunit SLX1 from Mycosarcoma maydis (Corn smut fungus).